The chain runs to 96 residues: Cytochrome c-553 (96 aa).

The signal sequence occupies residues methionine 1–alanine 19. Residues cysteine 29, cysteine 32, histidine 33, and methionine 73 each contribute to the heme c site.

This sequence belongs to the cytochrome c family. Post-translationally, binds 1 heme c group covalently per subunit.

It is found in the periplasm. Its function is as follows. Natural electron acceptor for a formate dehydrogenase. The sequence is that of Cytochrome c-553 from Helicobacter pylori (strain J99 / ATCC 700824) (Campylobacter pylori J99).